The sequence spans 548 residues: Acetamidase (548 aa).

Active-site charge relay system residues include lysine 129 and serine 204. Serine 228 (acyl-ester intermediate) is an active-site residue.

It belongs to the amidase family.

It carries out the reaction a monocarboxylic acid amide + H2O = a monocarboxylate + NH4(+). The enzyme catalyses acetamide + H2O = acetate + NH4(+). In terms of biological role, allows acetamide to be used as a sole carbon or nitrogen source. The sequence is that of Acetamidase (amdS) from Emericella nidulans (strain FGSC A4 / ATCC 38163 / CBS 112.46 / NRRL 194 / M139) (Aspergillus nidulans).